Consider the following 273-residue polypeptide: Gamma-glutamyl cyclotransferase aclK (273 aa).

The protein belongs to the class-I pyridoxal-phosphate-dependent aminotransferase family.

It catalyses the reaction an alpha-(gamma-L-glutamyl)-L-amino acid = 5-oxo-L-proline + an L-alpha-amino acid. It participates in mycotoxin biosynthesis. Gamma-glutamyl cyclotransferase; part of the gene cluster that mediates the biosynthesis of aspirochlorine (or antibiotic A30641), an unusual halogenated spiro compound with distinctive antifungal properties due to selective inhibition of protein biosynthesis, and which is also active against bacteria, viruses, and murine tumor cells. The non-ribosomal peptide synthetase (NRPS) aclP is responsible the formation of the diketopiperazine (DKP) core from the condensation of 2 phenylalanine residues. One Phe residue is tailored into chlorotyrosine by hydroxylation and chlorination, whereas the second Phe undergoes an unprecedented C-C bond cleavage to be converted into glycine. After formation of the DKP, sulfur is incorporated into the DKP by conjugation with glutathione by aclG, followed by its stepwise degradation to the thiol by aclI, aclJ and aclK, and the dithiol oxidation by aclT. In addition, oxygenases (aclB, aclC, aclL and aclO) and O-methyltransferases (aclM and aclU) act as tailoring enzymes to produce the intermediate dechloroaspirochlorine. Ultimately, chlorination of dechloroaspirochlorine by the halogenase aclH is the last step in the aspirochlorine pathway. The polypeptide is Gamma-glutamyl cyclotransferase aclK (Aspergillus oryzae (strain ATCC 42149 / RIB 40) (Yellow koji mold)).